The chain runs to 95 residues: Aspartyl/glutamyl-tRNA(Asn/Gln) amidotransferase subunit C (95 aa).

Belongs to the GatC family. Heterotrimer of A, B and C subunits.

It catalyses the reaction L-glutamyl-tRNA(Gln) + L-glutamine + ATP + H2O = L-glutaminyl-tRNA(Gln) + L-glutamate + ADP + phosphate + H(+). It carries out the reaction L-aspartyl-tRNA(Asn) + L-glutamine + ATP + H2O = L-asparaginyl-tRNA(Asn) + L-glutamate + ADP + phosphate + 2 H(+). In terms of biological role, allows the formation of correctly charged Asn-tRNA(Asn) or Gln-tRNA(Gln) through the transamidation of misacylated Asp-tRNA(Asn) or Glu-tRNA(Gln) in organisms which lack either or both of asparaginyl-tRNA or glutaminyl-tRNA synthetases. The reaction takes place in the presence of glutamine and ATP through an activated phospho-Asp-tRNA(Asn) or phospho-Glu-tRNA(Gln). This is Aspartyl/glutamyl-tRNA(Asn/Gln) amidotransferase subunit C from Thermodesulfovibrio yellowstonii (strain ATCC 51303 / DSM 11347 / YP87).